The sequence spans 480 residues: MAAPRTPNTARKVLGRLSLPERTFVADALRTETVGGVLLLVATVTALVWANIPALQHSYEAVSHFHFGPSALGLNLSVAHWAADGLLAVFFFVAGIELKRELVAGDLRDPRAAVLPVVAALCGMAVPALVYTLTNLTGHGSTQGWAVPTATDIAFALAVLAVIGTSLPSALRAFLLTLAVVDDLFAILIIAIFFTERINFAALGGAVAGLAVFWLLLRKGVRGWYVYVPLAVVVWALMYNSGVHATIAGVAMGLMLRCTTREGEEHSPGEHIEHLVRPLSAGLAVPLFALFSAGVVVSGGALGDVFTEPETLGVVLGLVVGKTLGIFGSTWLTARFTHAELSEDLEWADIFAVASLAGIGFTVSLLIGELAFAGDTLLTDEVKAAVLTGSLIAALCATVLLKIRNARYRGLCEDEERDEDRDGIPDVYEQDDPAYHLRMADIFERKAAEHRRIAAEKAAAARHGGAEVPGGAGEEDGRPA.

Helical transmembrane passes span 34 to 54 (VGGVLLLVATVTALVWANIPA), 76 to 96 (LSVAHWAADGLLAVFFFVAGI), 113 to 133 (AVLPVVAALCGMAVPALVYTL), 144 to 164 (GWAVPTATDIAFALAVLAVIG), 174 to 194 (FLLTLAVVDDLFAILIIAIFF), 197 to 217 (RINFAALGGAVAGLAVFWLLL), 223 to 243 (GWYVYVPLAVVVWALMYNSGV), 282 to 302 (GLAVPLFALFSAGVVVSGGAL), 312 to 332 (LGVVLGLVVGKTLGIFGSTWL), 350 to 370 (IFAVASLAGIGFTVSLLIGEL), and 381 to 401 (EVKAAVLTGSLIAALCATVLL). The segment at 454-480 (AAEKAAAARHGGAEVPGGAGEEDGRPA) is disordered.

The protein belongs to the NhaA Na(+)/H(+) (TC 2.A.33) antiporter family.

Its subcellular location is the cell membrane. The catalysed reaction is Na(+)(in) + 2 H(+)(out) = Na(+)(out) + 2 H(+)(in). In terms of biological role, na(+)/H(+) antiporter that extrudes sodium in exchange for external protons. This Streptomyces antibioticus protein is Na(+)/H(+) antiporter NhaA.